Here is a 315-residue protein sequence, read N- to C-terminus: Methionyl-tRNA formyltransferase (315 aa).

110-113 provides a ligand contact to (6S)-5,6,7,8-tetrahydrofolate; the sequence is SLLP.

Belongs to the Fmt family.

It carries out the reaction L-methionyl-tRNA(fMet) + (6R)-10-formyltetrahydrofolate = N-formyl-L-methionyl-tRNA(fMet) + (6S)-5,6,7,8-tetrahydrofolate + H(+). Its function is as follows. Attaches a formyl group to the free amino group of methionyl-tRNA(fMet). The formyl group appears to play a dual role in the initiator identity of N-formylmethionyl-tRNA by promoting its recognition by IF2 and preventing the misappropriation of this tRNA by the elongation apparatus. The protein is Methionyl-tRNA formyltransferase of Cutibacterium acnes (strain DSM 16379 / KPA171202) (Propionibacterium acnes).